The following is a 407-amino-acid chain: Steroid 3-ketoacyl-CoA thiolase FadA6 (407 aa).

Residue cysteine 110 is the Acyl-thioester intermediate of the active site. Residues glutamine 178, arginine 237–serine 239, and serine 262 contribute to the CoA site. Active-site proton acceptor residues include histidine 363 and cysteine 393. Glycine 395 lines the substrate pocket.

It belongs to the thiolase-like superfamily. Thiolase family.

It catalyses the reaction an acyl-CoA + acetyl-CoA = a 3-oxoacyl-CoA + CoA. It carries out the reaction 6-methyl-3,7-dioxodecanedioyl-CoA + CoA = 4-methyl-5-oxo-octanedioyl-CoA + acetyl-CoA. It functions in the pathway steroid metabolism; cholesterol degradation. Functionally, may be involved in the final steps of cholesterol and steroid degradation. Catalyzes the formation of 4-methyl-5-oxo-octanedioyl-CoA (MOODA-CoA) and acetyl-CoA from 6-methyl-3,7-dioxodecanedioyl-CoA (MeDODA-CoA) and coenzyme A. This chain is Steroid 3-ketoacyl-CoA thiolase FadA6, found in Mycobacterium tuberculosis (strain ATCC 25618 / H37Rv).